The following is a 231-amino-acid chain: Urease accessory protein UreF (231 aa).

It belongs to the UreF family. As to quaternary structure, ureD, UreF and UreG form a complex that acts as a GTP-hydrolysis-dependent molecular chaperone, activating the urease apoprotein by helping to assemble the nickel containing metallocenter of UreC. The UreE protein probably delivers the nickel.

It localises to the cytoplasm. Functionally, required for maturation of urease via the functional incorporation of the urease nickel metallocenter. The polypeptide is Urease accessory protein UreF (Magnetococcus marinus (strain ATCC BAA-1437 / JCM 17883 / MC-1)).